Reading from the N-terminus, the 241-residue chain is Proteasome subunit beta type-6 (241 aa).

A propeptide spanning residues M1–H19 is cleaved from the precursor.

The protein belongs to the peptidase T1B family. In terms of assembly, the 26S proteasome consists of a 20S proteasome core and two 19S regulatory subunits. The 20S proteasome core is composed of 28 subunits that are arranged in four stacked rings, resulting in a barrel-shaped structure. The two end rings are each formed by seven alpha subunits, and the two central rings are each formed by seven beta subunits. The catalytic chamber with the active sites is on the inside of the barrel.

The protein resides in the cytoplasm. Its subcellular location is the nucleus. Non-catalytic component of the proteasome which degrades poly-ubiquitinated proteins in the cytoplasm and in the nucleus. It is essential for the regulated turnover of proteins and for the removal of misfolded proteins. The proteasome is a multicatalytic proteinase complex that is characterized by its ability to cleave peptides with Arg, Phe, Tyr, Leu, and Glu adjacent to the leaving group at neutral or slightly basic pH. It has an ATP-dependent proteolytic activity. This Saccharomyces cerevisiae (strain ATCC 204508 / S288c) (Baker's yeast) protein is Proteasome subunit beta type-6 (PRE7).